We begin with the raw amino-acid sequence, 505 residues long: MEIPRQTEMVELVPNGKHLEGLLPVGVPTTDTQRTEDTQHCGEGKGFLQKSPSKEPHFTDFEGKTSFGMSVFNLSNAIMGSGILGLAYAMANTGIILFLFLLTAVALLSSYSIHLLLKSSGIVGIRAYEQLGYRAFGTPGKLAAALAITLQNIGAMSSYLYIIKSELPLVIQTFLNLEKPASVWYMDGNYLVILVSVTIILPLALMRQLGYLGYSSGFSLSCMVFFLIAVIYKKFQVPCPLAHNLANATGNFSHMVVAEEKAQLQGEPDTAAEAFCTPSYFTLNSQTAYTIPIMAFAFVCHPEVLPIYTELKDPSKRKMQHISNLSIAVMYVMYFLAALFGYLTFYDGVESELLHTYSKVDPFDVLILCVRVAVLIAVTLTVPIVLFPVRRAIQQMLFQNQEFSWLRHVLIATGLLTCINLLVIFAPNILGIFGIIGATSAPCLIFIFPAIFYFRIMPTDKEPARSTPKILALCFAAVGFLLMTMSLSFIIIDWVSGTSQHGGNH.

Residues 27-48 (VPTTDTQRTEDTQHCGEGKGFL) form a disordered region. Positions 33–43 (QRTEDTQHCGE) are enriched in basic and acidic residues. An N-linked (GlcNAc...) asparagine glycan is attached at Asn73. 5 consecutive transmembrane segments (helical) span residues 82 to 102 (GILGLAYAMANTGIILFLFLL), 105 to 125 (VALLSSYSIHLLLKSSGIVGI), 143 to 163 (AAALAITLQNIGAMSSYLYII), 186 to 206 (MDGNYLVILVSVTIILPLALM), and 212 to 232 (LGYSSGFSLSCMVFFLIAVIY). A disulfide bridge links Cys239 with Cys276. Residues Asn247 and Asn251 are each glycosylated (N-linked (GlcNAc...) asparagine). A helical membrane pass occupies residues 288–308 (AYTIPIMAFAFVCHPEVLPIY). The N-linked (GlcNAc...) asparagine glycan is linked to Asn324. 5 consecutive transmembrane segments (helical) span residues 325-345 (LSIAVMYVMYFLAALFGYLTF), 367-387 (ILCVRVAVLIAVTLTVPIVLF), 409-429 (VLIATGLLTCINLLVIFAPNI), 432-452 (IFGIIGATSAPCLIFIFPAIF), and 472-492 (ALCFAAVGFLLMTMSLSFIII).

This sequence belongs to the amino acid/polyamine transporter 2 family. In terms of tissue distribution, expressed predominantly in liver, moderately expressed in kidney and brain, and barely detectable in heart and muscle. Within liver, expressed in hepatocytes. Not detected in testis. Expressed in cells of the ganglion cell layer, in soma of some cells of the inner nuclear layer (at protein level). Expressed in the inner segments of photoreceptor cells.

Its subcellular location is the cell membrane. The protein localises to the basolateral cell membrane. It catalyses the reaction L-histidine(out) + Na(+)(out) + H(+)(in) = L-histidine(in) + Na(+)(in) + H(+)(out). The enzyme catalyses L-glutamine(out) + Na(+)(out) + H(+)(in) = L-glutamine(in) + Na(+)(in) + H(+)(out). The catalysed reaction is L-asparagine(out) + Na(+)(out) + H(+)(in) = L-asparagine(in) + Na(+)(in) + H(+)(out). Its function is as follows. Symporter that cotransports specific neutral amino acids and sodium ions, coupled to an H(+) antiporter activity. Mainly participates in the glutamate-GABA-glutamine cycle in brain where it transports L-glutamine from astrocytes in the intercellular space for the replenishment of both neurotransmitters glutamate and gamma-aminobutyric acid (GABA) in neurons and also functions as the major influx transporter in ganglion cells mediating the uptake of glutamine. The transport activity is specific for L-glutamine, L-histidine and L-asparagine. The transport is electroneutral coupled to the cotransport of 1 Na(+) and the antiport of 1 H(+). The transport is pH dependent, saturable, Li(+) tolerant and functions in both direction depending on the concentration gradients of its substrates and cotransported ions. Also mediates an amino acid-gated H(+) conductance that is not stoichiometrically coupled to the amino acid transport but which influences the ionic gradients that drive the amino acid transport. In addition, may play a role in nitrogen metabolism, amino acid homeostasis, glucose metabolism and renal ammoniagenesis. This Mus musculus (Mouse) protein is Sodium-coupled neutral amino acid transporter 3.